The chain runs to 501 residues: Lysine--tRNA ligase (501 aa).

Aspartate 411 and glutamate 418 together coordinate Mg(2+).

It belongs to the class-II aminoacyl-tRNA synthetase family. As to quaternary structure, homodimer. Requires Mg(2+) as cofactor.

It localises to the cytoplasm. The catalysed reaction is tRNA(Lys) + L-lysine + ATP = L-lysyl-tRNA(Lys) + AMP + diphosphate. The chain is Lysine--tRNA ligase from Mycolicibacterium gilvum (strain PYR-GCK) (Mycobacterium gilvum (strain PYR-GCK)).